Consider the following 283-residue polypeptide: MKHSFSRFFGLGEKEQEPEIAEHDTNKEEILEIPVNAIVPNRFQPRTIFSDEKIKELAMTIHTHGIIQPIVVRHTEEEGQYELIAGERRWRAVQSLEWEKIPAIIKDFSDTETASVALIENLQREELSSIEEAHAYARLLELHDLTQEALAQRLGKGQSTIANKLRLLKLPQPVQEAIMEKKITERHARALIPLKQPELQVTLLTEIIEKSLNVKQTEDRVVKMLEQGQRKPKPRRKAFSRDTRIAMNTIRQSLSMVEDSGVKLNTEEEEFEEYIQLTIRIPK.

A DNA-binding region (H-T-H motif) is located at residues 148–167; sequence EALAQRLGKGQSTIANKLRL.

Belongs to the ParB family.

Its subcellular location is the cytoplasm. The protein localises to the nucleoid. In terms of biological role, effects nucleoid occlusion by binding relatively nonspecifically to DNA and preventing the assembly of the division machinery in the vicinity of the nucleoid, especially under conditions that disturb the cell cycle. It helps to coordinate cell division and chromosome segregation by preventing the formation of the Z ring through the nucleoid, which would cause chromosome breakage. The sequence is that of Nucleoid occlusion protein (noc) from Bacillus subtilis (strain 168).